Consider the following 220-residue polypeptide: Large ribosomal subunit protein uL1 (220 aa).

Belongs to the universal ribosomal protein uL1 family. In terms of assembly, part of the 50S ribosomal subunit.

Functionally, binds directly to 23S rRNA. The L1 stalk is quite mobile in the ribosome, and is involved in E site tRNA release. Its function is as follows. Protein L1 is also a translational repressor protein, it controls the translation of the L11 operon by binding to its mRNA. In Ehrlichia ruminantium (strain Gardel), this protein is Large ribosomal subunit protein uL1.